A 433-amino-acid chain; its full sequence is MQFLQEKVKLIKKEDPVMLKSPEDFPVYWFETSDSVSHRYQFQSDGHLSMKVVDDARPVPQKMVESFLNKFFPSGYPYSVNEGYLRYTQFRALQHFSSAALSVLSTQSLLFAAGLRPTPAQATVVSWILKDGMQHVGKLICSNLGARMDSEPKRWRILADVLYDLGTGLELVSPLCPHLFLEMAGLGNFAKGMATVAARATRLPIYSSFAKEGNLSDIFAKGEAISTLFNVAGIGAGIQLASTICSSMEGKLVVGSILSVVHVYSVVEQMRGVPINTLNPQRTALIVANFLKTGKVPSPPDLRFQEDLMFPERPIQDAGNVKVGRALHKAVKPSEVQRLKQVFVEEKFLLSHGKSWTDMVLEHDATGEDALRGWLVAAYVKSMTKIYNDPDDIILQDAYDKMNDVFNPFLSQVQAKGWYTDRFLDGTGTRFAW.

The protein belongs to the RUS1 family. As to quaternary structure, interacts (via the DUF647 domain) with RUS1 (via the DUF647 domain). In terms of tissue distribution, expressed throughout the plant, with a higher expression near the root apical meristem, in the cortex region of the root elongation zone, in lateral roots and emerging lateral roots. Not detected in extreme root apical meristem or root cap.

The protein resides in the plastid. In terms of biological role, involved in a root UV-B sensing pathway and in the protection against the hypersensitivity to very low-fluence-rate (VLF) UV-B. RSU1 and RUS2 are probably both negative modulators of the same UV-B perception pathway, which when overstimulated in the roots causes a block to postgermination development. Required for polar auxin transport and to maintain the normal levels of PIN proteins in the root. The sequence is that of Protein root UVB sensitive 2, chloroplastic from Arabidopsis thaliana (Mouse-ear cress).